The following is a 68-amino-acid chain: Peptide TsPep3 (68 aa).

A signal peptide spans 1–26 (MKLSCGFLLIFLVLSAMIATFSEVEA). Cystine bridges form between Cys30/Cys38, Cys33/Cys54, Cys37/Cys47, and Cys42/Cys52. Residues 56–68 (GRSDLNEEFENYQ) constitute a propeptide that is removed on maturation.

As to expression, expressed by the venom gland.

The protein localises to the secreted. Its function is as follows. Probable weak potassium channel blocker. This Tityus serrulatus (Brazilian scorpion) protein is Peptide TsPep3.